A 407-amino-acid chain; its full sequence is Wilms tumor protein homolog B (407 aa).

Glycyl lysine isopeptide (Lys-Gly) (interchain with G-Cter in SUMO) cross-links involve residues lysine 55 and lysine 158. A 9aaTAD motif is present at residues 213–221 (MTWNQMNLG). C2H2-type zinc fingers lie at residues 284 to 308 (FMCA…SRKH), 314 to 338 (YQCD…QRRH), 344 to 366 (FQCK…TRTH), and 372 to 396 (FSCR…HNMH). Important for interaction with target DNA stretches follow at residues 328–342 (SDQL…TGVK) and 354–362 (SRSDHLKTH).

Belongs to the EGR C2H2-type zinc-finger protein family. Expressed in the pronephric anlage from stage 23 to 30. Also expressed in the adult kidney (mesonephros) and in testis.

The protein localises to the nucleus. It is found in the cytoplasm. Its subcellular location is the nucleus speckle. Its function is as follows. Transcription factor required for development of the vascular component of the pronephric kidney, the glomus; may repress tubule-specific gene expression in the portion of the pronephros fated to form the glomus. Recognizes and binds to the DNA sequence 5'-GCG(T/G)GGGCG-3'. Inhibits Wnt-signaling during embryonic development. The protein is Wilms tumor protein homolog B (wt1-b) of Xenopus laevis (African clawed frog).